Reading from the N-terminus, the 465-residue chain is Uronate isomerase (465 aa).

The protein belongs to the metallo-dependent hydrolases superfamily. Uronate isomerase family.

It carries out the reaction D-glucuronate = D-fructuronate. The catalysed reaction is aldehydo-D-galacturonate = keto-D-tagaturonate. The protein operates within carbohydrate metabolism; pentose and glucuronate interconversion. The chain is Uronate isomerase from Streptococcus equi subsp. zooepidemicus (strain H70).